A 130-amino-acid chain; its full sequence is Methylglyoxal synthase (130 aa).

Residues 1-130 (MSTPRIALIA…DLARRLPVKA (130 aa)) form the MGS-like domain. Substrate-binding positions include His11, Lys15, 37 to 40 (TGTT), and 57 to 58 (SG). Catalysis depends on Asp63, which acts as the Proton donor/acceptor. Residue His90 coordinates substrate.

This sequence belongs to the methylglyoxal synthase family.

It catalyses the reaction dihydroxyacetone phosphate = methylglyoxal + phosphate. In terms of biological role, catalyzes the formation of methylglyoxal from dihydroxyacetone phosphate. This chain is Methylglyoxal synthase, found in Burkholderia thailandensis (strain ATCC 700388 / DSM 13276 / CCUG 48851 / CIP 106301 / E264).